We begin with the raw amino-acid sequence, 207 residues long: Superoxide dismutase [Mn] (207 aa).

Mn(2+) is bound by residues His-28, His-76, Asp-160, and His-164.

Belongs to the iron/manganese superoxide dismutase family. Requires Mn(2+) as cofactor.

It catalyses the reaction 2 superoxide + 2 H(+) = H2O2 + O2. Destroys superoxide anion radicals which are normally produced within the cells and which are toxic to biological systems. This is Superoxide dismutase [Mn] (sodA) from Mycolicibacterium fortuitum (Mycobacterium fortuitum).